Reading from the N-terminus, the 1108-residue chain is DNA-directed RNA polymerase subunit beta (1108 aa).

Belongs to the RNA polymerase beta chain family. In plastids the minimal PEP RNA polymerase catalytic core is composed of four subunits: alpha, beta, beta', and beta''. When a (nuclear-encoded) sigma factor is associated with the core the holoenzyme is formed, which can initiate transcription.

It is found in the plastid. The protein resides in the chloroplast. The catalysed reaction is RNA(n) + a ribonucleoside 5'-triphosphate = RNA(n+1) + diphosphate. Its function is as follows. DNA-dependent RNA polymerase catalyzes the transcription of DNA into RNA using the four ribonucleoside triphosphates as substrates. The polypeptide is DNA-directed RNA polymerase subunit beta (Gnetum parvifolium (Small-leaved jointfir)).